The primary structure comprises 249 residues: NAD kinase (249 aa).

The active-site Proton acceptor is the Asp45. NAD(+) contacts are provided by residues 45–46 (DG), Arg50, 110–111 (NE), Asp138, and 149–154 (SGWGMS).

Belongs to the NAD kinase family. Requires a divalent metal cation as cofactor.

It is found in the cytoplasm. The enzyme catalyses NAD(+) + ATP = ADP + NADP(+) + H(+). In terms of biological role, involved in the regulation of the intracellular balance of NAD and NADP, and is a key enzyme in the biosynthesis of NADP. Catalyzes specifically the phosphorylation on 2'-hydroxyl of the adenosine moiety of NAD to yield NADP. The protein is NAD kinase of Saccharolobus islandicus (strain Y.N.15.51 / Yellowstone #2) (Sulfolobus islandicus).